Consider the following 1481-residue polypeptide: MQRSPLEKASVVSKLFFSWTRPILRKGYRQRLELSDIYQIPSADSADNLSEKLEREWDRELASKKNPKLINALRRCFFWRFMFYGILLYLGEVTKAVQPLLLGRIIASYDPDNKEERSIAIYLGIGLCLLFIVRTLLLHPAIFGLHHIGMQMRIAMFSLIYKKTLKLSSRVLDKISIGQLVSLLSNNLNKFDEGLALAHFVWIVPLQVALLMGLIWELLQASAFCGLGFLIVLALFQAGLGRMMMKYRDQRAGKINERLVITSEMIENIQSVKAYCWEEAMEKMIENLRQTELKLTRKAAYVRYFNSSAFFFSGFFVVFLSVLPYALIKGIVLRKIFTTISFCIVLRMAVTRQFPWAVQTWYDSLGAINKIQDFLQKQEYKTLEYNLTTTEVVMENVTAFWEEGFGELFEKAKQNNSNRKTSNDDDSLFFSNFSLLGTPVLKDINFKIERGQLLAVAGSTGAGKTSLLMMIMGELEPSEGKIKHSGRISFCSQFSWIMPGTIKENIIFGVSYDEYRYRSVIKACQLEEDISKFAEKDNIVLGEGGITLSGGQRARISLARAVYKDADLYLLDSPFGYLDVLTEKEIFESCVCKLMANKTRILVTSKMEHLKKADKILILHEGSSYFYGTFSELQNLRPDFSSKLMGYDSFDQFSAERRNSILTETLRRFSLEGDAPVSWTETKKQSFKQTGEFGEKRKNSILNPINSVRKFSIVQKTPLQMNGIEEDSDEPLERRLSLVPDSEQGEVILPRISVISTGPTLQARRRQSVLNLMTHSVNQGHSIHRKTAASTRKVSLAPQANLTELDIYSRRLSQETGLEISEEINEEDLKECFFDDMESIPAVTTWNTYLRYITVHKSLIFVLIWCLVIFLAEVAASLVVLWFLGNTPPQDKGNSTYSRNNSYAVIITRTSSYYVFYIYVGVADTLLAMGFFRGLPLVHTLITVSKILHHKMLHSVLQAPMSTLNTLKAGGILNRFSKDIAILDDLLPLTIFDFIQLLLIVIGAIAVVAVLQPYIFVATVPVIVAFIMLRAYFLQTSQQLKQLESEGRSPIFTHLVTSLKGLWTLRAFGRQPYFETLFHKALNLHTANWFLYLSTLRWFQMRIEMIFVIFFIAVTFISILTTGEGEGTVGIILTLAMNIMSTLQWAVNSSIDVDSLMRSVSRVFKFIDMPTEEGKPTRSTKPYKNGQLSKVMIIENSHVKKDDIWPSGGQMTVKDLTAKYTEGGNPILENISFSISPGQRVGLLGRTGSGKSTLLSAFLRLLNTEGEIQIDGVSWDSITLQQWRKAFGVIPQKVFIFSGTFRKNLDPYEQWSDQEIWEVADEVGLRSVIEQFPGKLDFVLVDGGCVLSHGHKQLMCLARSVLSKAKILLLDEPSAHLDPVTYQIIRRTLKQAFADCTVILCEHRIEAMLECQQFLVIEENKVRQYDSIQKLLNERSLFRQAISPSDRVKLFPHRNSSKCKSQPQIAALKEETEEEVQDTRL.

Residues 1–77 (MQRSPLEKAS…KLINALRRCF (77 aa)) lie on the Cytoplasmic side of the membrane. The chain crosses the membrane as a helical span at residues 78 to 98 (FWRFMFYGILLYLGEVTKAVQ). The 285-residue stretch at 81-365 (FMFYGILLYL…WAVQTWYDSL (285 aa)) folds into the ABC transmembrane type-1 1 domain. The Extracellular portion of the chain corresponds to 99–122 (PLLLGRIIASYDPDNKEERSIAIY). The helical transmembrane segment at 123–146 (LGIGLCLLFIVRTLLLHPAIFGLH) threads the bilayer. Over 147-195 (HIGMQMRIAMFSLIYKKTLKLSSRVLDKISIGQLVSLLSNNLNKFDEGL) the chain is Cytoplasmic. A helical transmembrane segment spans residues 196 to 216 (ALAHFVWIVPLQVALLMGLIW). Topologically, residues 217–222 (ELLQAS) are extracellular. The helical transmembrane segment at 223–243 (AFCGLGFLIVLALFQAGLGRM) threads the bilayer. At 244–298 (MMKYRDQRAGKINERLVITSEMIENIQSVKAYCWEEAMEKMIENLRQTELKLTRK) the chain is on the cytoplasmic side. A helical membrane pass occupies residues 299–319 (AAYVRYFNSSAFFFSGFFVVF). Over 320–339 (LSVLPYALIKGIVLRKIFTT) the chain is Extracellular. Residues 340 to 358 (ISFCIVLRMAVTRQFPWAV) form a helical membrane-spanning segment. Topologically, residues 359–858 (QTWYDSLGAI…YLRYITVHKS (500 aa)) are cytoplasmic. ATP contacts are provided by residues tryptophan 401, serine 434, 458-465 (GSTGAGKT), and glutamine 493. The ABC transporter 1 domain occupies 423–646 (NDDDSLFFSN…RPDFSSKLMG (224 aa)). Cysteine 524 is lipidated: S-palmitoyl cysteine. Serine 549 and serine 660 each carry phosphoserine. Residues 654–831 (SAERRNSILT…EEINEEDLKE (178 aa)) are disordered R region. Serine 670 is subject to Phosphoserine; by PKA. Serine 686 is subject to Phosphoserine. Lysine 688 is covalently cross-linked (Glycyl lysine isopeptide (Lys-Gly) (interchain with G-Cter in ubiquitin)). Residues serine 700 and serine 712 each carry the phosphoserine modification. Phosphothreonine is present on threonine 717. 6 positions are modified to phosphoserine: serine 737, serine 753, serine 768, serine 790, serine 795, and serine 813. Residues 859–879 (LIFVLIWCLVIFLAEVAASLV) form a helical membrane-spanning segment. The region spanning 859 to 1155 (LIFVLIWCLV…AVNSSIDVDS (297 aa)) is the ABC transmembrane type-1 2 domain. At 880–918 (VLWFLGNTPPQDKGNSTYSRNNSYAVIITRTSSYYVFYI) the chain is on the extracellular side. N-linked (GlcNAc...) asparagine glycosylation is found at asparagine 894 and asparagine 900. The discontinuously helical transmembrane segment at 919–939 (YVGVADTLLAMGFFRGLPLVH) threads the bilayer. Residues 940–990 (TLITVSKILHHKMLHSVLQAPMSTLNTLKAGGILNRFSKDIAILDDLLPLT) are Cytoplasmic-facing. The chain crosses the membrane as a helical span at residues 991 to 1011 (IFDFIQLLLIVIGAIAVVAVL). The Extracellular segment spans residues 1012-1013 (QP). Residues 1014–1034 (YIFVATVPVIVAFIMLRAYFL) form a helical membrane-spanning segment. Residues 1035–1095 (QTSQQLKQLE…TANWFLYLST (61 aa)) lie on the Cytoplasmic side of the membrane. The chain crosses the membrane as a helical span at residues 1096–1116 (LRWFQMRIEMIFVIFFIAVTF). The Extracellular portion of the chain corresponds to 1117–1130 (ISILTTGEGEGTVG). The chain crosses the membrane as a helical span at residues 1131 to 1151 (IILTLAMNIMSTLQWAVNSSI). Topologically, residues 1152–1481 (DVDSLMRSVS…TEEEVQDTRL (330 aa)) are cytoplasmic. The region spanning 1211-1444 (MTVKDLTAKY…RSLFRQAISP (234 aa)) is the ABC transporter 2 domain. ATP contacts are provided by residues tyrosine 1220 and 1245 to 1252 (GRTGSGKS). The interaction with GORASP2 stretch occupies residues 1387–1481 (RTLKQAFADC…TEEEVQDTRL (95 aa)). Cysteine 1396 carries S-palmitoyl cysteine lipidation. 2 positions are modified to phosphoserine: serine 1445 and serine 1457. A disordered region spans residues 1462–1481 (QPQIAALKEETEEEVQDTRL). Positions 1471-1481 (ETEEEVQDTRL) are enriched in acidic residues. Positions 1479–1481 (TRL) match the PDZ-binding motif.

This sequence belongs to the ABC transporter superfamily. ABCC family. CFTR transporter (TC 3.A.1.202) subfamily. Monomer; does not require oligomerization for channel activity. May form oligomers in the membrane. Interacts with SLC26A3, SLC26A6 and NHERF1. Interacts with SHANK2. Interacts with MYO6. Interacts (via C-terminus) with GOPC (via PDZ domain); this promotes CFTR internalization and thereby decreases channel activity. Interacts with SLC4A7 through NHERF1. Found in a complex with MYO5B and RAB11A. Interacts with ANO1. Interacts with SLC26A8. Interacts with AHCYL1; the interaction increases CFTR activity. Interacts with CSE1L. The core-glycosylated form interacts with GORASP2 (via PDZ GRASP-type 1 domain) in respone to ER stress. Interacts with MARCHF2; the interaction leads to CFTR ubiqtuitination and degradation. Interacts with ADGRG2. In terms of processing, N-glycosylated. Post-translationally, phosphorylated; cAMP treatment promotes phosphorylation and activates the channel. Dephosphorylation decreases the ATPase activity (in vitro). Phosphorylation at PKA sites activates the channel. Phosphorylation at PKC sites enhances the response to phosphorylation by PKA. Phosphorylated by AMPK; this inhibits channel activity. Ubiquitinated, leading to its degradation in the lysosome. Deubiquitination by USP10 in early endosomes enhances its endocytic recycling to the cell membrane. Ubiquitinated by RNF185 during ER stress. Ubiquitinated by MARCHF2.

The protein localises to the apical cell membrane. It is found in the early endosome membrane. It localises to the cell membrane. Its subcellular location is the recycling endosome membrane. The protein resides in the endoplasmic reticulum membrane. The protein localises to the nucleus. It catalyses the reaction ATP + H2O + closed Cl(-) channel = ADP + phosphate + open Cl(-) channel.. The catalysed reaction is chloride(in) = chloride(out). It carries out the reaction hydrogencarbonate(in) = hydrogencarbonate(out). The enzyme catalyses ATP + H2O = ADP + phosphate + H(+). In terms of biological role, epithelial ion channel that plays an important role in the regulation of epithelial ion and water transport and fluid homeostasis. Mediates the transport of chloride ions across the cell membrane. Possesses an intrinsic ATPase activity and utilizes ATP to gate its channel; the passive flow of anions through the channel is gated by cycles of ATP binding and hydrolysis by the ATP-binding domains. The ion channel is also permeable to HCO(3)(-); selectivity depends on the extracellular chloride concentration. Exerts its function also by modulating the activity of other ion channels and transporters. Contributes to the regulation of the pH and the ion content of the epithelial fluid layer. Modulates the activity of the epithelial sodium channel (ENaC) complex, in part by regulating the cell surface expression of the ENaC complex. May regulate bicarbonate secretion and salvage in epithelial cells by regulating the transporter SLC4A7. Can inhibit the chloride channel activity of ANO1. Plays a role in the chloride and bicarbonate homeostasis during sperm epididymal maturation and capacitation. The polypeptide is Cystic fibrosis transmembrane conductance regulator (Chlorocebus aethiops (Green monkey)).